The primary structure comprises 272 residues: Formamidopyrimidine-DNA glycosylase (272 aa).

The active-site Schiff-base intermediate with DNA is P2. Residue E3 is the Proton donor of the active site. The active-site Proton donor; for beta-elimination activity is the K58. 3 residues coordinate DNA: H93, R112, and R153. The FPG-type zinc finger occupies 238 to 272; it reads HVYGKSGQHCPKCGNILEDLKISNRGTVYCPHCQR. The Proton donor; for delta-elimination activity role is filled by R262.

It belongs to the FPG family. In terms of assembly, monomer. Zn(2+) is required as a cofactor.

It catalyses the reaction Hydrolysis of DNA containing ring-opened 7-methylguanine residues, releasing 2,6-diamino-4-hydroxy-5-(N-methyl)formamidopyrimidine.. It carries out the reaction 2'-deoxyribonucleotide-(2'-deoxyribose 5'-phosphate)-2'-deoxyribonucleotide-DNA = a 3'-end 2'-deoxyribonucleotide-(2,3-dehydro-2,3-deoxyribose 5'-phosphate)-DNA + a 5'-end 5'-phospho-2'-deoxyribonucleoside-DNA + H(+). Its function is as follows. Involved in base excision repair of DNA damaged by oxidation or by mutagenic agents. Acts as a DNA glycosylase that recognizes and removes damaged bases. Has a preference for oxidized purines, such as 7,8-dihydro-8-oxoguanine (8-oxoG). Has AP (apurinic/apyrimidinic) lyase activity and introduces nicks in the DNA strand. Cleaves the DNA backbone by beta-delta elimination to generate a single-strand break at the site of the removed base with both 3'- and 5'-phosphates. The sequence is that of Formamidopyrimidine-DNA glycosylase from Dichelobacter nodosus (strain VCS1703A).